The primary structure comprises 663 residues: Protein associated with UVRAG as autophagy enhancer (663 aa).

Disordered stretches follow at residues Met-1–Glu-36 and Asp-65–Ala-136. Composition is skewed to polar residues over residues Thr-80 to Leu-93 and Pro-105 to Thr-130. Residues Glu-196 to Glu-235 are interaction with UVRAG. Lys-484, Lys-534, Lys-574, and Lys-634 each carry N6-acetyllysine.

Interacts with UVRAG; the interaction is direct and promotes association with the PI3K/PI3KC3 and HOPS complexes. Interacts with STX17. Acetylated by KAT5/TIP60 under autophagy induction, promoting autophagosome maturation and lipid metabolism. Lys-484 and Lys-574 constitute the key sites for tuning function in autophagy.

The protein resides in the cytoplasmic vesicle. The protein localises to the autophagosome membrane. Its function is as follows. Regulator of autophagy that promotes autophagosome maturation by facilitating the biogenesis of phosphatidylinositol 3-phosphate (PtdIns(3)P) in late steps of autophagy. Acts by antagonizing RUBCN, thereby stimulating phosphatidylinositol 3-kinase activity of the PI3K/PI3KC3 complex. Following anchorage to the autophagosomal SNARE STX17, promotes the recruitment of PI3K/PI3KC3 and HOPS complexes to the autophagosome to regulate the fusion specificity of autophagosomes with late endosomes/lysosomes. Binds phosphoinositides phosphatidylinositol 3-phosphate (PtdIns(3)P), 4-phosphate (PtdIns(4)P) and 5-phosphate (PtdIns(5)P). In addition to its role in autophagy, acts as a regulator of lipid and glycogen homeostasis. May act as a tumor suppressor. In Bos taurus (Bovine), this protein is Protein associated with UVRAG as autophagy enhancer.